Reading from the N-terminus, the 192-residue chain is Fe/S biogenesis protein NfuA (192 aa).

[4Fe-4S] cluster-binding residues include Cys149 and Cys152.

This sequence belongs to the NfuA family. As to quaternary structure, homodimer. [4Fe-4S] cluster is required as a cofactor.

Functionally, involved in iron-sulfur cluster biogenesis. Binds a 4Fe-4S cluster, can transfer this cluster to apoproteins, and thereby intervenes in the maturation of Fe/S proteins. Could also act as a scaffold/chaperone for damaged Fe/S proteins. The sequence is that of Fe/S biogenesis protein NfuA from Shewanella frigidimarina (strain NCIMB 400).